The chain runs to 997 residues: Phosphoenolpyruvate carboxylase (997 aa).

A disordered region spans residues 1-67; the sequence is MKSSGSARTA…KPAARTREDK (67 aa). Active-site residues include histidine 207 and lysine 649.

Belongs to the PEPCase type 1 family. Mg(2+) is required as a cofactor.

It carries out the reaction oxaloacetate + phosphate = phosphoenolpyruvate + hydrogencarbonate. Functionally, forms oxaloacetate, a four-carbon dicarboxylic acid source for the tricarboxylic acid cycle. The sequence is that of Phosphoenolpyruvate carboxylase from Burkholderia vietnamiensis (strain G4 / LMG 22486) (Burkholderia cepacia (strain R1808)).